A 345-amino-acid polypeptide reads, in one-letter code: Succinylglutamate desuccinylase (345 aa).

The Zn(2+) site is built by His-64, Glu-67, and His-161. The active site involves Glu-225.

It belongs to the AspA/AstE family. Succinylglutamate desuccinylase subfamily. Zn(2+) is required as a cofactor.

It catalyses the reaction N-succinyl-L-glutamate + H2O = L-glutamate + succinate. It participates in amino-acid degradation; L-arginine degradation via AST pathway; L-glutamate and succinate from L-arginine: step 5/5. Functionally, transforms N(2)-succinylglutamate into succinate and glutamate. The sequence is that of Succinylglutamate desuccinylase from Shewanella pealeana (strain ATCC 700345 / ANG-SQ1).